Consider the following 706-residue polypeptide: Ribosomal RNA large subunit methyltransferase K/L (706 aa).

A THUMP domain is found at 43-154 (LMYQSLLWSR…RDMASVALDL (112 aa)).

This sequence belongs to the methyltransferase superfamily. RlmKL family.

The protein resides in the cytoplasm. It catalyses the reaction guanosine(2445) in 23S rRNA + S-adenosyl-L-methionine = N(2)-methylguanosine(2445) in 23S rRNA + S-adenosyl-L-homocysteine + H(+). The catalysed reaction is guanosine(2069) in 23S rRNA + S-adenosyl-L-methionine = N(2)-methylguanosine(2069) in 23S rRNA + S-adenosyl-L-homocysteine + H(+). Specifically methylates the guanine in position 2445 (m2G2445) and the guanine in position 2069 (m7G2069) of 23S rRNA. This chain is Ribosomal RNA large subunit methyltransferase K/L, found in Yersinia pestis bv. Antiqua (strain Antiqua).